Here is a 232-residue protein sequence, read N- to C-terminus: tRNA1(Val) (adenine(37)-N6)-methyltransferase (232 aa).

The protein belongs to the methyltransferase superfamily. tRNA (adenine-N(6)-)-methyltransferase family.

It localises to the cytoplasm. It carries out the reaction adenosine(37) in tRNA1(Val) + S-adenosyl-L-methionine = N(6)-methyladenosine(37) in tRNA1(Val) + S-adenosyl-L-homocysteine + H(+). Functionally, specifically methylates the adenine in position 37 of tRNA(1)(Val) (anticodon cmo5UAC). This chain is tRNA1(Val) (adenine(37)-N6)-methyltransferase, found in Haemophilus influenzae (strain PittGG).